A 460-amino-acid chain; its full sequence is Argininosuccinate lyase (460 aa).

The protein belongs to the lyase 1 family. Argininosuccinate lyase subfamily.

It is found in the cytoplasm. It catalyses the reaction 2-(N(omega)-L-arginino)succinate = fumarate + L-arginine. Its pathway is amino-acid biosynthesis; L-arginine biosynthesis; L-arginine from L-ornithine and carbamoyl phosphate: step 3/3. In Solibacter usitatus (strain Ellin6076), this protein is Argininosuccinate lyase.